The following is a 312-amino-acid chain: Iron/alpha-ketoglutarate-dependent dioxygenase penM (312 aa).

Fe cation-binding residues include His-134, Asp-136, and His-211. Positions 287–312 are disordered; sequence LGLKSEQPLPDGMEKGSMQETDIGGQ.

Belongs to the PhyH family. As to quaternary structure, homodimer. Fe cation serves as cofactor.

The catalysed reaction is (-)-cyclopeptine + 2-oxoglutarate + O2 = (Z)-dehydrocyclopeptine + succinate + CO2 + H2O. It catalyses the reaction (Z)-dehydrocyclopeptine + 2-oxoglutarate + O2 = (-)-cyclopenine + succinate + CO2. The enzyme catalyses (-)-4'-methoxycyclopeptine + 2-oxoglutarate + O2 = (Z)-4'-methoxydehydrocyclopeptine + succinate + CO2 + H2O. It carries out the reaction (Z)-4'-methoxydehydrocyclopeptine + 2-oxoglutarate + O2 = (-)-4'-methoxycyclopenine + succinate + CO2. Its pathway is secondary metabolite biosynthesis. It participates in alkaloid biosynthesis. The protein operates within mycotoxin biosynthesis. Its function is as follows. Iron/alpha-ketoglutarate-dependent dioxygenase; part of the gene cluster that mediates the biosynthesis of penigequinolones, potent insecticidal alkaloids that contain a highly modified 10-carbon prenyl group. The first stage is catalyzed by the nonribosomal peptide synthetase penN that condenses anthranilic acid and O-methyl-L-tyrosine to produce 4'-methoxycyclopeptin. 4'-methoxycyclopeptin is then converted to 4'-methoxydehydrocyclopeptin by the ketoglutarate-dependent dioxygenase penM through dehydrogenation to form a double bond between C-alpha and C-beta of the O-methyltyrosine side chain. PenM also converts its first product methoxydehydrocyclopeptin to 4'-methoxycyclopenin. The following conversion of 4'methoxycyclopenin into 4'-methoxyviridicatin is catalyzed by the cyclopenase penL. 4'-methoxyviridicatin is the precursor of quinolone natural products, and is further converted to quinolinone B. The prenyltransferase penI then catalyzes the canonical Friedel-Crafts alkylation of quinolinone B with dimethylallyl cation to yield dimethylallyl quinolone, which is subjected to FAD-dependent dehydrogenation by the FAD-linked oxidoreductase penH to yield conjugated aryl diene. The delta(3') double bond then serves as the site of the second alkylation with DMAPP catalyzed by the prenyltransferase penG to yield a carbenium ion intermediate, which can be attacked by H(2)O to yield a styrenyl quinolone containing a C3'-hydroxyprenyl chain, or undergo cyclization to yield yaequinolones J1 and J2. The conversion of the styrenyl quinolone into the tetrahydrofuran-containing yaequinolone C is performed by the FAD-dependent monooxygenase penE and involves epoxidation of the terminal C7'-C8' olefin, followed by epoxide ring opening initiated by the C3' hydroxyl group. The predicted cysteine hydrolase penJ acts as an epoxide hydrolase that enhances the rate of the 5-exo-tet cyclization step, increasing the yield of yaequinolone C. PenF catalyzes the cationic rearrangement of the epoxide formed by penE (before ring opening to produce yaequinolone C) into yaequinolone D. Finally, the short-chain dehydrogenase/reductase (SDR)-like reductase penD, catalyzes both the dehydration of yaequinolone D and the reduction of the resulting oxonium to yield penigequinolone. The protein is Iron/alpha-ketoglutarate-dependent dioxygenase penM of Penicillium thymicola.